Here is a 248-residue protein sequence, read N- to C-terminus: MVAPRISPKIVLVGFALFAIISASLAFPSGLNCPDPKPYPKFFLDSLWSGPSGYLGTTLIQGYVMIDTTGEFDFAKVASINGTFLQYYSKVLGTYVSEMYINLFGQQVKVMEAPFTLLERNPFNRFGEYCMVSNPRSVMPGYVEGLPITNKFFYNTYYNDTHGKSFGNVEQSEYFFFDETRNNSINCLTEFNPDATIKTFTCYKFQKVSNNVIPPTSKRSIEDMDSLRIGGLDLPEELVAPKYRHYFK.

The signal sequence occupies residues 1-26 (MVAPRISPKIVLVGFALFAIISASLA).

This is an uncharacterized protein from Acanthamoeba polyphaga mimivirus (APMV).